The chain runs to 589 residues: Cytoplasmic polyadenylation element-binding protein 2 (589 aa).

Disordered stretches follow at residues 1-103 (MPPP…QAAA) and 118-140 (PLLK…SMSW). Low complexity predominate over residues 24–33 (FFPSFSPVSP). Positions 44 to 53 (SGGGGGGFGG) are enriched in gly residues. The segment covering 60–81 (VPPPPPPAMNIPQQQPPPPAAP) has biased composition (pro residues). Composition is skewed to low complexity over residues 82 to 103 (QQPQ…QAAA) and 130 to 140 (SSGWGTGSMSW). S89 bears the Phosphoserine mark. RRM domains lie at 332–423 (RKVF…PWNL) and 440–522 (KTIF…PYVL).

This sequence belongs to the RRM CPEB family. As to quaternary structure, interacts with TENT2/GLD2.

It is found in the cytoplasm. Its function is as follows. May play a role in translational regulation of stored mRNAs in transcriptionally inactive haploid spermatids. Binds to poly(U) RNA oligomers. Required for cell cycle progression, specifically for the transition from metaphase to anaphase. The protein is Cytoplasmic polyadenylation element-binding protein 2 (CPEB2) of Homo sapiens (Human).